We begin with the raw amino-acid sequence, 630 residues long: Amino acid transporter heavy chain SLC3A2 (630 aa).

Methionine 1 bears the N-acetylmethionine mark. Residue glutamate 2 is modified to N-acetylserine. Glutamate 2 bears the Phosphoserine mark. A disordered region spans residues 15–39 (IPRQLPGSHSEAGVQGLSAGDDSEL). The Cytoplasmic portion of the chain corresponds to 102–184 (MSQDTEVDMK…SPGWVRTRWA (83 aa)). Serine 103 is modified (phosphoserine). A Phosphothreonine modification is found at threonine 106. The residue at position 134 (serine 134) is a Phosphoserine. Lysine 147 is covalently cross-linked (Glycyl lysine isopeptide (Lys-Gly) (interchain with G-Cter in ubiquitin)). Serine 165 carries the post-translational modification Phosphoserine. Lysine 166 participates in a covalent cross-link: Glycyl lysine isopeptide (Lys-Gly) (interchain with G-Cter in SUMO2). A helical; Signal-anchor for type II membrane protein transmembrane segment spans residues 185 to 205 (LLLLFWLGWLGMLAGAVVIIV). Topologically, residues 206-630 (RAPRCRELPA…GLLLRFPYAA (425 aa)) are extracellular. Asparagine 365 and asparagine 381 each carry an N-linked (GlcNAc...) asparagine glycan. Phosphoserine is present on residues serine 406, serine 408, and serine 410. Asparagine 424 is a glycosylation site (N-linked (GlcNAc...) (complex) asparagine). Residue asparagine 506 is glycosylated (N-linked (GlcNAc...) asparagine). Phosphoserine is present on residues serine 527 and serine 531.

Disulfide-linked heterodimer with a non-glycosylated catalytic light subunit (SLC7A5, SLC7A6, SLC7A7, SLC7A8, SLC7A10 or SLC7A11). Interacts with TLCD3A/CT120. Interacts with ICAM1. Constitutively and specifically associates with beta-1 integrins (alpha-2/beta-1, alpha-3/beta-1, alpha-5/beta-1 and alpha-6/beta-1), but minimally with alpha-4/beta-1. Interacts with LAPTM4B; recruits SLC3A2 and SLC7A5/LAT1 to lysosomes to promote leucine uptake into these organelles and is required for mTORC1 activation. As to quaternary structure, (Microbial infection) Interacts with hepatitis C virus/HCV envelope glycoprotein E2; the interaction may facilitate viral entry into host cell. N-glycosylated; N-glycosylation is crucial for trafficking and stability of SLC3A2 to the plasma membrane. In terms of processing, phosphorylation on Ser-406; Ser-408 or Ser-410 and on Ser-527 or Ser-531 by ecto-protein kinases favors heterotypic cell-cell interactions. As to expression, expressed ubiquitously in all tissues tested with highest levels detected in kidney, placenta and testis and weakest level in thymus. During gestation, expression in the placenta was significantly stronger at full-term than at the mid-trimester stage. Expressed in HUVECS and at low levels in resting peripheral blood T-lymphocytes and quiescent fibroblasts. Also expressed in fetal liver and in the astrocytic process of primary astrocytic gliomas. Expressed in retinal endothelial cells and in the intestinal epithelial cell line C2BBe1.

The protein localises to the apical cell membrane. Its subcellular location is the cell membrane. It localises to the cell junction. The protein resides in the lysosome membrane. It is found in the melanosome. The protein localises to the basolateral cell membrane. Functionally, acts as a chaperone that facilitates biogenesis and trafficking of functional transporters heterodimers to the plasma membrane. Forms heterodimer with SLC7 family transporters (SLC7A5, SLC7A6, SLC7A7, SLC7A8, SLC7A10 and SLC7A11), a group of amino-acid antiporters. Heterodimers function as amino acids exchangers, the specificity of the substrate depending on the SLC7A subunit. Heterodimers SLC3A2/SLC7A6 or SLC3A2/SLC7A7 mediate the uptake of dibasic amino acids. Heterodimer SLC3A2/SLC7A11 functions as an antiporter by mediating the exchange of extracellular anionic L-cystine and intracellular L-glutamate across the cellular plasma membrane. SLC3A2/SLC7A10 translocates small neutral L- and D-amino acids across the plasma membrane. SLC3A2/SLC75 or SLC3A2/SLC7A8 translocates neutral amino acids with broad specificity, thyroid hormones and L-DOPA. SLC3A2 is essential for plasma membrane localization, stability, and the transport activity of SLC7A5 and SLC7A8. When associated with LAPTM4B, the heterodimer SLC7A5 is recruited to lysosomes to promote leucine uptake into these organelles, and thereby mediates mTORC1 activation. Modulates integrin-related signaling and is essential for integrin-dependent cell spreading, migration and tumor progression. (Microbial infection) In case of hepatitis C virus/HCV infection, the complex formed by SLC3A2 and SLC7A5/LAT1 plays a role in HCV propagation by facilitating viral entry into host cell and increasing L-leucine uptake-mediated mTORC1 signaling activation, thereby contributing to HCV-mediated pathogenesis. Its function is as follows. (Microbial infection) Acts as a receptor for malaria parasite Plasmodium vivax (Thai isolate) in immature red blood cells. The chain is Amino acid transporter heavy chain SLC3A2 from Homo sapiens (Human).